Here is a 321-residue protein sequence, read N- to C-terminus: Transaldolase (321 aa).

K132 functions as the Schiff-base intermediate with substrate in the catalytic mechanism.

It belongs to the transaldolase family. Type 1 subfamily. Homodimer.

It is found in the cytoplasm. It carries out the reaction D-sedoheptulose 7-phosphate + D-glyceraldehyde 3-phosphate = D-erythrose 4-phosphate + beta-D-fructose 6-phosphate. The protein operates within carbohydrate degradation; pentose phosphate pathway; D-glyceraldehyde 3-phosphate and beta-D-fructose 6-phosphate from D-ribose 5-phosphate and D-xylulose 5-phosphate (non-oxidative stage): step 2/3. Transaldolase is important for the balance of metabolites in the pentose-phosphate pathway. The protein is Transaldolase of Rhizobium etli (strain ATCC 51251 / DSM 11541 / JCM 21823 / NBRC 15573 / CFN 42).